The following is a 173-amino-acid chain: Large ribosomal subunit protein uL10 (173 aa).

It belongs to the universal ribosomal protein uL10 family. As to quaternary structure, part of the ribosomal stalk of the 50S ribosomal subunit. The N-terminus interacts with L11 and the large rRNA to form the base of the stalk. The C-terminus forms an elongated spine to which L12 dimers bind in a sequential fashion forming a multimeric L10(L12)X complex.

Forms part of the ribosomal stalk, playing a central role in the interaction of the ribosome with GTP-bound translation factors. The chain is Large ribosomal subunit protein uL10 from Desulfatibacillum aliphaticivorans.